The sequence spans 270 residues: 3-phenylpropionate-dihydrodiol/cinnamic acid-dihydrodiol dehydrogenase (270 aa).

10–34 is an NAD(+) binding site; it reads FITGGGSGLGLALVERFIEEGAQVA. Position 143 (S143) interacts with substrate. The active-site Proton acceptor is Y156.

The protein belongs to the short-chain dehydrogenases/reductases (SDR) family.

The catalysed reaction is 3-(cis-5,6-dihydroxycyclohexa-1,3-dien-1-yl)propanoate + NAD(+) = 3-(2,3-dihydroxyphenyl)propanoate + NADH + H(+). It catalyses the reaction (2E)-3-(cis-5,6-dihydroxycyclohexa-1,3-dien-1-yl)prop-2-enoate + NAD(+) = (2E)-3-(2,3-dihydroxyphenyl)prop-2-enoate + NADH + H(+). It participates in aromatic compound metabolism; 3-phenylpropanoate degradation. Its function is as follows. Converts 3-phenylpropionate-dihydrodiol (PP-dihydrodiol) and cinnamic acid-dihydrodiol (CI-dihydrodiol) into 3-(2,3-dihydroxylphenyl)propanoic acid (DHPP) and 2,3-dihydroxicinnamic acid (DHCI), respectively. The chain is 3-phenylpropionate-dihydrodiol/cinnamic acid-dihydrodiol dehydrogenase from Shigella flexneri serotype 5b (strain 8401).